Reading from the N-terminus, the 796-residue chain is Phenylalanine--tRNA ligase beta subunit (796 aa).

In terms of domain architecture, tRNA-binding spans 39–149 (SAALKSFRVA…GDAPLGTTFA (111 aa)). The 73-residue stretch at 398–470 (LARKALAYDP…RVHGLDAVPS (73 aa)) folds into the B5 domain. Mg(2+) is bound by residues aspartate 448, aspartate 454, glutamate 457, and glutamate 458. The FDX-ACB domain maps to 703 to 795 (PALQAVTRDF…AAGKLGAELR (93 aa)).

This sequence belongs to the phenylalanyl-tRNA synthetase beta subunit family. Type 1 subfamily. In terms of assembly, tetramer of two alpha and two beta subunits. Mg(2+) is required as a cofactor.

The protein resides in the cytoplasm. The catalysed reaction is tRNA(Phe) + L-phenylalanine + ATP = L-phenylalanyl-tRNA(Phe) + AMP + diphosphate + H(+). The chain is Phenylalanine--tRNA ligase beta subunit from Novosphingobium aromaticivorans (strain ATCC 700278 / DSM 12444 / CCUG 56034 / CIP 105152 / NBRC 16084 / F199).